The chain runs to 439 residues: MSQDLIETTATTTKIVEARELGHQIHDSLLEQLKLQQEELLQQQRDLFFQEQQLQLQQQVTQPVSNNGNTWSFTQGLVIGQVSVIFIIIVFVKFFVFADSSSHIPTKPGLDGATGVIVKRNKNKKHSNGQFANDGENEDDTSLDSNQSKISSILEKTYYDVNNHASESLDWFNVLVAQTISQLRSEALLKDNIYHSLNNFLTNAKLPDFIDTINLTEIDIGDDFPIFSNCRIKYGEDLKRLEAKIDVDLSDTLTLGIATKLLLNQPRPLTAVLPVSLTVSIVRFSGCLTVSLINTKDIDLKNVDKTSNMNGYSKENANGDGASSSNNDEDEDDGGTALMFSFSPDYRLEFIVKSLIGSRAKLQDVPKISSLIENQLRTWFIERCVEPRFQVVRLPSLWPRTKNTREPVTKKTTTTPSTTVNGTSAATITTPGEYVNSNI.

The Lumenal portion of the chain corresponds to 1–76 (MSQDLIETTA…NGNTWSFTQG (76 aa)). A helical transmembrane segment spans residues 77–97 (LVIGQVSVIFIIIVFVKFFVF). Over 98–439 (ADSSSHIPTK…TPGEYVNSNI (342 aa)) the chain is Cytoplasmic. Disordered stretches follow at residues 125–145 (KHSN…SLDS), 309–336 (MNGY…DGGT), and 405–425 (REPV…GTSA). Positions 165–395 (ASESLDWFNV…EPRFQVVRLP (231 aa)) constitute an SMP-LTD domain. 2 stretches are compositionally biased toward low complexity: residues 315–326 (ENANGDGASSSN) and 410–424 (KKTT…NGTS).

It belongs to the MMM1 family. Homodimer. Component of the ER-mitochondria encounter structure (ERMES) or MDM complex, composed of MMM1, MDM10, MDM12 and MDM34. An MMM1 homodimer associates with one molecule of MDM12 on each side in a pairwise head-to-tail manner, and the SMP-LTD domains of MMM1 and MDM12 generate a continuous hydrophobic tunnel for phospholipid trafficking.

Its subcellular location is the endoplasmic reticulum membrane. Component of the ERMES/MDM complex, which serves as a molecular tether to connect the endoplasmic reticulum (ER) and mitochondria. Components of this complex are involved in the control of mitochondrial shape and protein biogenesis, and function in nonvesicular lipid trafficking between the ER and mitochondria. The MDM12-MMM1 subcomplex functions in the major beta-barrel assembly pathway that is responsible for biogenesis of all outer membrane beta-barrel proteins, and acts in a late step after the SAM complex. The MDM10-MDM12-MMM1 subcomplex further acts in the TOM40-specific pathway after the action of the MDM12-MMM1 complex. Essential for establishing and maintaining the structure of mitochondria and maintenance of mtDNA nucleoids. The sequence is that of Maintenance of mitochondrial morphology protein 1 from Candida albicans (strain SC5314 / ATCC MYA-2876) (Yeast).